The primary structure comprises 247 residues: Triosephosphate isomerase (247 aa).

9–11 (NWK) provides a ligand contact to substrate. His94 acts as the Electrophile in catalysis. Glu166 functions as the Proton acceptor in the catalytic mechanism. Substrate-binding positions include Gly172, Ser211, and 232-233 (GG).

This sequence belongs to the triosephosphate isomerase family. As to quaternary structure, homodimer.

Its subcellular location is the cytoplasm. The enzyme catalyses D-glyceraldehyde 3-phosphate = dihydroxyacetone phosphate. The protein operates within carbohydrate biosynthesis; gluconeogenesis. Its pathway is carbohydrate degradation; glycolysis; D-glyceraldehyde 3-phosphate from glycerone phosphate: step 1/1. Its function is as follows. Involved in the gluconeogenesis. Catalyzes stereospecifically the conversion of dihydroxyacetone phosphate (DHAP) to D-glyceraldehyde-3-phosphate (G3P). This is Triosephosphate isomerase from Cupriavidus taiwanensis (strain DSM 17343 / BCRC 17206 / CCUG 44338 / CIP 107171 / LMG 19424 / R1) (Ralstonia taiwanensis (strain LMG 19424)).